A 186-amino-acid polypeptide reads, in one-letter code: Large ribosomal subunit protein uL5 (186 aa).

The protein belongs to the universal ribosomal protein uL5 family. As to quaternary structure, part of the 50S ribosomal subunit; part of the 5S rRNA/L5/L18/L25 subcomplex. Contacts the 5S rRNA and the P site tRNA. Forms a bridge to the 30S subunit in the 70S ribosome.

Its function is as follows. This is one of the proteins that bind and probably mediate the attachment of the 5S RNA into the large ribosomal subunit, where it forms part of the central protuberance. In the 70S ribosome it contacts protein S13 of the 30S subunit (bridge B1b), connecting the 2 subunits; this bridge is implicated in subunit movement. Contacts the P site tRNA; the 5S rRNA and some of its associated proteins might help stabilize positioning of ribosome-bound tRNAs. This chain is Large ribosomal subunit protein uL5, found in Phenylobacterium zucineum (strain HLK1).